The primary structure comprises 119 residues: Large ribosomal subunit protein bL20 (119 aa).

It belongs to the bacterial ribosomal protein bL20 family.

Functionally, binds directly to 23S ribosomal RNA and is necessary for the in vitro assembly process of the 50S ribosomal subunit. It is not involved in the protein synthesizing functions of that subunit. The chain is Large ribosomal subunit protein bL20 from Enterococcus faecalis (strain ATCC 700802 / V583).